Consider the following 458-residue polypeptide: tRNA modification GTPase MnmE (458 aa).

Arg22, Glu84, and Arg123 together coordinate (6S)-5-formyl-5,6,7,8-tetrahydrofolate. The TrmE-type G domain occupies 220–379; it reads GIATAIIGRP…LETAIADLFF (160 aa). Asn230 serves as a coordination point for K(+). GTP-binding positions include 230–235, 249–255, and 274–277; these read NVGKSS, TDIAGTT, and DTAG. Ser234 contacts Mg(2+). The K(+) site is built by Thr249, Ile251, and Thr254. Thr255 contacts Mg(2+). Lys458 contacts (6S)-5-formyl-5,6,7,8-tetrahydrofolate.

The protein belongs to the TRAFAC class TrmE-Era-EngA-EngB-Septin-like GTPase superfamily. TrmE GTPase family. As to quaternary structure, homodimer. Heterotetramer of two MnmE and two MnmG subunits. Requires K(+) as cofactor.

It is found in the cytoplasm. Functionally, exhibits a very high intrinsic GTPase hydrolysis rate. Involved in the addition of a carboxymethylaminomethyl (cmnm) group at the wobble position (U34) of certain tRNAs, forming tRNA-cmnm(5)s(2)U34. This is tRNA modification GTPase MnmE from Bacillus cereus (strain ATCC 10987 / NRS 248).